The chain runs to 616 residues: Dihydroxy-acid dehydratase (616 aa).

D81 is a Mg(2+) binding site. C122 contacts [2Fe-2S] cluster. Residues D123 and K124 each coordinate Mg(2+). K124 is modified (N6-carboxylysine). Position 195 (C195) interacts with [2Fe-2S] cluster. Position 491 (E491) interacts with Mg(2+). The Proton acceptor role is filled by S517.

This sequence belongs to the IlvD/Edd family. As to quaternary structure, homodimer. The cofactor is [2Fe-2S] cluster. It depends on Mg(2+) as a cofactor.

The enzyme catalyses (2R)-2,3-dihydroxy-3-methylbutanoate = 3-methyl-2-oxobutanoate + H2O. The catalysed reaction is (2R,3R)-2,3-dihydroxy-3-methylpentanoate = (S)-3-methyl-2-oxopentanoate + H2O. It participates in amino-acid biosynthesis; L-isoleucine biosynthesis; L-isoleucine from 2-oxobutanoate: step 3/4. It functions in the pathway amino-acid biosynthesis; L-valine biosynthesis; L-valine from pyruvate: step 3/4. In terms of biological role, functions in the biosynthesis of branched-chain amino acids. Catalyzes the dehydration of (2R,3R)-2,3-dihydroxy-3-methylpentanoate (2,3-dihydroxy-3-methylvalerate) into 2-oxo-3-methylpentanoate (2-oxo-3-methylvalerate) and of (2R)-2,3-dihydroxy-3-methylbutanoate (2,3-dihydroxyisovalerate) into 2-oxo-3-methylbutanoate (2-oxoisovalerate), the penultimate precursor to L-isoleucine and L-valine, respectively. The protein is Dihydroxy-acid dehydratase of Erwinia tasmaniensis (strain DSM 17950 / CFBP 7177 / CIP 109463 / NCPPB 4357 / Et1/99).